The chain runs to 182 residues: Thioredoxin F-type, chloroplastic (182 aa).

The interval 1-22 (MPLSLRLAPSPTALSPTTGGFS) is disordered. The Thioredoxin domain occupies 52–177 (KRGDSSVVRC…LVAAIETARS (126 aa)). Residues C102 and C105 each act as nucleophile in the active site. A disulfide bridge connects residues C102 and C105.

This sequence belongs to the thioredoxin family. Plant F-type subfamily. As to quaternary structure, forms a complex with heterodimeric ferredoxin-thioredoxin reductase (FTR) and ferredoxin.

The protein resides in the plastid. It is found in the chloroplast. Its function is as follows. Participates in various redox reactions through the reversible oxidation of the active center dithiol to a disulfide. The F form is known to activate a number of enzymes of the photosynthetic carbon cycle. This chain is Thioredoxin F-type, chloroplastic (TRXF), found in Brassica napus (Rape).